A 72-amino-acid polypeptide reads, in one-letter code: Translational regulator CsrA (72 aa).

The protein belongs to the CsrA/RsmA family. As to quaternary structure, homodimer; the beta-strands of each monomer intercalate to form a hydrophobic core, while the alpha-helices form wings that extend away from the core.

The protein resides in the cytoplasm. Functionally, a translational regulator that binds mRNA to regulate translation initiation and/or mRNA stability. Usually binds in the 5'-UTR at or near the Shine-Dalgarno sequence preventing ribosome-binding, thus repressing translation. Its main target seems to be the major flagellin gene, while its function is anatagonized by FliW. This chain is Translational regulator CsrA, found in Lachnoclostridium phytofermentans (strain ATCC 700394 / DSM 18823 / ISDg) (Clostridium phytofermentans).